Reading from the N-terminus, the 1256-residue chain is N-acetylglucosamine-1-phosphotransferase subunits alpha/beta (1256 aa).

Residues 22 to 42 (VCFLGVVVTIVSAFQFGEVVL) traverse the membrane as a helical segment. Asn-83, Asn-114, Asn-148, Asn-179, and Asn-250 each carry an N-linked (GlcNAc...) asparagine glycan. 4 cysteine pairs are disulfide-bonded: Cys-438/Cys-461, Cys-452/Cys-468, Cys-505/Cys-528, and Cys-519/Cys-535. 2 LNR repeats span residues 438 to 473 (CAEGCPGSWIKDGYCDKACNNSACDWDGGDCSGNSG) and 505 to 545 (CNQG…ELYK). Asp-449, Asp-464, Asp-467, Asp-516, Asp-531, and Asp-534 together coordinate Ca(2+). 5 N-linked (GlcNAc...) asparagine glycosylation sites follow: Asn-614, Asn-699, Asn-729, Asn-829, and Asn-1009. The DMAP1-binding domain maps to 699 to 798 (NISLLPKDAQ…TFPAVSVKVN (100 aa)). The EF-hand domain occupies 1005-1040 (VQPLNISQVFDEVDTDQSGVLSDREIRTLATRIHEL). Positions 1018, 1020, 1022, and 1029 each coordinate Ca(2+). N-linked (GlcNAc...) asparagine glycosylation occurs at Asn-1129. A helical transmembrane segment spans residues 1215 to 1235 (VLATLIMFTIFSFFAEQLIAL).

This sequence belongs to the stealth family. In terms of assembly, hexamer of two alpha, two beta and two gamma (GNPTG) subunits; disulfide-linked. The alpha and/or the beta subunits of the enzyme constitute the catalytic subunits. Interacts with LYSET; facilitates proper localization of GNPTAB. In terms of processing, the alpha- and beta-subunits are generated by a proteolytic cleavage by MBTPS1 protease at the Lys-928-Asp-929 bond. Expressed in the heart, whole brain, placenta, lung, liver, skeletal muscle, kidney and pancreas.

Its subcellular location is the golgi apparatus membrane. The catalysed reaction is N(4)-[alpha-D-mannosyl-(1-&gt;2)-alpha-D-mannosyl-(glycan)]-L-asparaginyl-[protein] + UDP-N-acetyl-alpha-D-glucosamine = N(4)-[6-(N-acetyl-alpha-D-glucosaminyl-1-phospho)-alpha-D-mannosyl-(1-&gt;2)-alpha-D-mannosyl-(glycan)]-L-asparaginyl-[protein] + UMP + H(+). Functionally, catalyzes the formation of mannose 6-phosphate (M6P) markers on high mannose type oligosaccharides in the Golgi apparatus. M6P residues are required to bind to the M6P receptors (MPR), which mediate the vesicular transport of lysosomal enzymes to the endosomal/prelysosomal compartment. This chain is N-acetylglucosamine-1-phosphotransferase subunits alpha/beta (GNPTAB), found in Homo sapiens (Human).